The following is a 212-amino-acid chain: Large ribosomal subunit protein uL4 (212 aa).

Belongs to the universal ribosomal protein uL4 family. In terms of assembly, part of the 50S ribosomal subunit.

One of the primary rRNA binding proteins, this protein initially binds near the 5'-end of the 23S rRNA. It is important during the early stages of 50S assembly. It makes multiple contacts with different domains of the 23S rRNA in the assembled 50S subunit and ribosome. In terms of biological role, forms part of the polypeptide exit tunnel. This chain is Large ribosomal subunit protein uL4, found in Caulobacter sp. (strain K31).